A 103-amino-acid polypeptide reads, in one-letter code: Large ribosomal subunit protein bL21 (103 aa).

This sequence belongs to the bacterial ribosomal protein bL21 family. In terms of assembly, part of the 50S ribosomal subunit. Contacts protein L20.

In terms of biological role, this protein binds to 23S rRNA in the presence of protein L20. This chain is Large ribosomal subunit protein bL21, found in Mycobacteroides abscessus (strain ATCC 19977 / DSM 44196 / CCUG 20993 / CIP 104536 / JCM 13569 / NCTC 13031 / TMC 1543 / L948) (Mycobacterium abscessus).